The sequence spans 62 residues: Large ribosomal subunit protein bL28 (62 aa).

This sequence belongs to the bacterial ribosomal protein bL28 family.

The chain is Large ribosomal subunit protein bL28 from Acidothermus cellulolyticus (strain ATCC 43068 / DSM 8971 / 11B).